The chain runs to 183 residues: ATP synthase subunit delta (183 aa).

The protein belongs to the ATPase delta chain family. As to quaternary structure, F-type ATPases have 2 components, F(1) - the catalytic core - and F(0) - the membrane proton channel. F(1) has five subunits: alpha(3), beta(3), gamma(1), delta(1), epsilon(1). F(0) has three main subunits: a(1), b(2) and c(10-14). The alpha and beta chains form an alternating ring which encloses part of the gamma chain. F(1) is attached to F(0) by a central stalk formed by the gamma and epsilon chains, while a peripheral stalk is formed by the delta and b chains.

It localises to the cell inner membrane. F(1)F(0) ATP synthase produces ATP from ADP in the presence of a proton or sodium gradient. F-type ATPases consist of two structural domains, F(1) containing the extramembraneous catalytic core and F(0) containing the membrane proton channel, linked together by a central stalk and a peripheral stalk. During catalysis, ATP synthesis in the catalytic domain of F(1) is coupled via a rotary mechanism of the central stalk subunits to proton translocation. Functionally, this protein is part of the stalk that links CF(0) to CF(1). It either transmits conformational changes from CF(0) to CF(1) or is implicated in proton conduction. This chain is ATP synthase subunit delta, found in Desulfatibacillum aliphaticivorans.